Here is a 486-residue protein sequence, read N- to C-terminus: Galactose-3-O-sulfotransferase 4 (486 aa).

Residues Met-1–Leu-18 lie on the Cytoplasmic side of the membrane. A helical; Signal-anchor for type II membrane protein transmembrane segment spans residues Gly-19–Phe-39. Topologically, residues Gln-40 to Pro-486 are lumenal. The N-linked (GlcNAc...) asparagine glycan is linked to Asn-374.

Belongs to the galactose-3-O-sulfotransferase family. It depends on Mn(2+) as a cofactor. Expressed mainly in placenta, thymus, testis, ovary, spinal cord, trachea and adrenal gland and at low levels in brain, lung, spleen, prostate, small intestine, colon, stomach thyroid and lymph node.

Its subcellular location is the golgi apparatus. It localises to the golgi stack membrane. The protein operates within protein modification; carbohydrate sulfation. Functionally, catalyzes the transfer of sulfate to beta-1,3-linked galactose residues in O-linked glycoproteins. Good substrates include asialofetuin, Gal-beta-1,3-GalNAc and Gal-beta-1,3 (GlcNAc-beta-1,6)GalNAc. The chain is Galactose-3-O-sulfotransferase 4 (GAL3ST4) from Homo sapiens (Human).